Reading from the N-terminus, the 257-residue chain is MKKIFVKPRELVVPGTLLAQGPFKNGRGTFREGNAIYSTVIGLVEIRGNVIRVIPLEGPYIPEVGDNVLGKIVDVKFSSWTVDIGAPYQASLRVQDAVEERIDLLKTDLRKIFDIGDIIYAKVKAFNEVNQIDLTTKGMPFKGGPLRGGQLVTITPSKVPRLIGKGGSMINMIKTLTGTRIIVGQNGWVWVSGKNDELERLAIEAILKVDRESHTQGLTDRVKEFLLSRLRELKEQGVIEEIPEVNGEEGGEDDGQA.

Positions 65–137 (GDNVLGKIVD…EVNQIDLTTK (73 aa)) constitute an S1 motif domain. In terms of domain architecture, KH spans 147–206 (RGGQLVTITPSKVPRLIGKGGSMINMIKTLTGTRIIVGQNGWVWVSGKNDELERLAIEAI).

It belongs to the RRP4 family. As to quaternary structure, component of the archaeal exosome complex. Forms a trimer of Rrp4 and/or Csl4 subunits. The trimer associates with a hexameric ring-like arrangement composed of 3 Rrp41-Rrp42 heterodimers.

It is found in the cytoplasm. Its function is as follows. Non-catalytic component of the exosome, which is a complex involved in RNA degradation. Increases the RNA binding and the efficiency of RNA degradation. Confers strong poly(A) specificity to the exosome. The protein is Exosome complex component Rrp4 of Thermococcus kodakarensis (strain ATCC BAA-918 / JCM 12380 / KOD1) (Pyrococcus kodakaraensis (strain KOD1)).